The following is a 626-amino-acid chain: Carnitine O-acetyltransferase (626 aa).

K93 is subject to N6-succinyllysine. An N6-acetyllysine; alternate modification is found at K261. K261 carries the N6-succinyllysine; alternate modification. N6-acetyllysine is present on K268. H343 serves as the catalytic Proton acceptor. Residues K419 and 423–430 (KSEKLSPD) contribute to the CoA site. Residues Y452 and S454 each coordinate (R)-carnitine. S456 serves as a coordination point for CoA. Position 465 (T465) interacts with (R)-carnitine. Residues R504 and Q555 each contribute to the CoA site. The Microbody targeting signal signature appears at 624–626 (AKL).

It belongs to the carnitine/choline acetyltransferase family. In terms of assembly, monomer.

The protein localises to the endoplasmic reticulum. Its subcellular location is the peroxisome. It localises to the mitochondrion inner membrane. The catalysed reaction is (R)-carnitine + acetyl-CoA = O-acetyl-(R)-carnitine + CoA. The enzyme catalyses propanoyl-CoA + (R)-carnitine = O-propanoyl-(R)-carnitine + CoA. It carries out the reaction butanoyl-CoA + (R)-carnitine = O-butanoyl-(R)-carnitine + CoA. It catalyses the reaction hexanoyl-CoA + (R)-carnitine = O-hexanoyl-(R)-carnitine + CoA. The catalysed reaction is octanoyl-CoA + (R)-carnitine = O-octanoyl-(R)-carnitine + CoA. The enzyme catalyses decanoyl-CoA + (R)-carnitine = O-decanoyl-(R)-carnitine + CoA. It carries out the reaction 3-methylbutanoyl-CoA + (R)-carnitine = O-3-methylbutanoyl-(R)-carnitine + CoA. It catalyses the reaction 2-methylpropanoyl-CoA + (R)-carnitine = O-isobutanoyl-(R)-carnitine + CoA. The catalysed reaction is 2-methylbutanoyl-CoA + (R)-carnitine = O-2-methylbutanoyl-(R)-carnitine + CoA. The enzyme catalyses acetoacetyl-CoA + (R)-carnitine = O-3-oxobutanoyl-(R)-carnitine + CoA. It carries out the reaction 3-hydroxybutanoyl-CoA + (R)-carnitine = O-3-hydroxybutanoyl-(R)-carnitine + CoA. It catalyses the reaction 4,8-dimethylnonanoyl-CoA + (R)-carnitine = O-4,8-dimethylnonanoyl-(R)-carnitine + CoA. The catalysed reaction is 2,6-dimethylheptanoyl-CoA + (R)-carnitine = O-2,6-dimethylheptanoyl-(R)-carnitine + CoA. Catalyzes the reversible transfer of acyl groups from carnitine to coenzyme A (CoA) and regulates the acyl-CoA/CoA ratio. Also plays a crucial role in the transport of fatty acids for beta-oxidation. Responsible for the synthesis of short- and branched-chain acylcarnitines. Active towards some branched-chain amino acid oxidation pathway (BCAAO) intermediates. Trans-2-enoyl-CoAs and 2-methylacyl-CoAs are poor substrates. The sequence is that of Carnitine O-acetyltransferase from Mus musculus (Mouse).